The sequence spans 93 residues: Small ribosomal subunit protein bS6 (93 aa).

Belongs to the bacterial ribosomal protein bS6 family.

Functionally, binds together with bS18 to 16S ribosomal RNA. The protein is Small ribosomal subunit protein bS6 (rpsF) of Treponema pallidum (strain Nichols).